An 804-amino-acid polypeptide reads, in one-letter code: Chondroitin sulfate synthase mig-22 (804 aa).

The Cytoplasmic segment spans residues 1–6; it reads MVGGGR. A helical; Signal-anchor for type II membrane protein membrane pass occupies residues 7 to 27; it reads TGIHLLLGFLIGAALALFFFS. At 28 to 804 the chain is on the lumenal side; sequence STPSIDLTSS…QLAKLLFHEK (777 aa). Residues N123, N172, and N268 are each glycosylated (N-linked (GlcNAc...) asparagine).

It belongs to the chondroitin N-acetylgalactosaminyltransferase family. In terms of assembly, interacts with sqv-5. It depends on a divalent metal cation as a cofactor. As to expression, expressed in seam cells, the vulval epithelium and in oocytes (at protein level).

It is found in the golgi apparatus. Its subcellular location is the golgi stack membrane. The enzyme catalyses 3-O-(beta-D-GlcA-(1-&gt;3)-beta-D-GalNAc-(1-&gt;4)-beta-D-GlcA-(1-&gt;3)-beta-D-Gal-(1-&gt;3)-beta-D-Gal-(1-&gt;4)-beta-D-Xyl)-L-seryl-[protein] + UDP-N-acetyl-alpha-D-galactosamine = 3-O-(beta-D-GalNAc-(1-&gt;4)-beta-D-GlcA-(1-&gt;3)-beta-D-GalNAc-(1-&gt;4)-beta-D-GlcA-(1-&gt;3)-beta-D-Gal-(1-&gt;3)-beta-D-Gal-(1-&gt;4)-beta-D-Xyl)-L-seryl-[protein] + UDP + H(+). The catalysed reaction is 3-O-{beta-D-GlcA-(1-&gt;3)-[beta-D-GalNAc-(1-&gt;4)-beta-D-GlcA-(1-&gt;3)](n)-beta-D-GalNAc-(1-&gt;4)-beta-D-GlcA-(1-&gt;3)-beta-D-Gal-(1-&gt;3)-beta-D-Gal-(1-&gt;4)-beta-D-Xyl}-L-seryl-[protein] + UDP-N-acetyl-alpha-D-galactosamine = 3-O-{[beta-D-GalNAc-(1-&gt;4)-beta-D-GlcA-(1-&gt;3)](n+1)-beta-D-GalNAc-(1-&gt;4)-beta-D-GlcA-(1-&gt;3)-beta-D-Gal-(1-&gt;3)-beta-D-Gal-(1-&gt;4)-beta-D-Xyl}-L-seryl-[protein] + UDP + H(+). It catalyses the reaction 3-O-(beta-D-GalNAc-(1-&gt;4)-beta-D-GlcA-(1-&gt;3)-beta-D-Gal-(1-&gt;3)-beta-D-Gal-(1-&gt;4)-beta-D-Xyl)-L-seryl-[protein] + UDP-alpha-D-glucuronate = 3-O-(beta-D-GlcA-(1-&gt;3)-beta-D-GalNAc-(1-&gt;4)-beta-D-GlcA-(1-&gt;3)-beta-D-Gal-(1-&gt;3)-beta-D-Gal-(1-&gt;4)-beta-D-Xyl)-L-seryl-[protein] + UDP + H(+). It carries out the reaction 3-O-{[beta-D-GalNAc-(1-&gt;4)-beta-D-GlcA-(1-&gt;3)](n)-beta-D-GalNAc-(1-&gt;4)-beta-D-GlcA-(1-&gt;3)-beta-D-Gal-(1-&gt;3)-beta-D-Gal-(1-&gt;4)-beta-D-Xyl}-L-seryl-[protein] + UDP-alpha-D-glucuronate = 3-O-{beta-D-GlcA-(1-&gt;3)-[beta-D-GalNAc-(1-&gt;4)-beta-D-GlcA-(1-&gt;3)](n)-beta-D-GalNAc-(1-&gt;4)-beta-D-GlcA-(1-&gt;3)-beta-D-Gal-(1-&gt;3)-beta-D-Gal-(1-&gt;4)-beta-D-Xyl}-L-seryl-[protein] + UDP + H(+). Its function is as follows. Has both beta-1,3-glucuronic acid and beta-1,4-N-acetylgalactosamine transferase activity. Transfers glucuronic acid (GlcUA) from UDP-GlcUA and N-acetylgalactosamine (GalNAc) from UDP-GalNAc to the non-reducing end of the elongating chondroitin polymer. Required together with sqv-5 for the biosynthesis of chondroitin. Chondroitin is involved in organogenesis of the vulva, maturation of the gonad, and neural development. May have a specific role in unc-6/netrin-mediated dorsal guidance of gonadal distal tip cells. Glycosyltransferase activity is weak. This Caenorhabditis elegans protein is Chondroitin sulfate synthase mig-22 (mig-22).